Reading from the N-terminus, the 62-residue chain is Ribulose bisphosphate carboxylase/oxygenase activase, chloroplastic (62 aa).

The protein belongs to the RuBisCO activase family.

It localises to the plastid. Its subcellular location is the chloroplast stroma. In terms of biological role, activation of RuBisCO (ribulose-1,5-bisphosphate carboxylase/oxygenase; EC 4.1.1.39) involves the ATP-dependent carboxylation of the epsilon-amino group of lysine leading to a carbamate structure. The protein is Ribulose bisphosphate carboxylase/oxygenase activase, chloroplastic of Vitis sp. (Grape).